The following is a 171-amino-acid chain: Ribosome maturation factor RimM (171 aa).

Positions 96–170 constitute a PRC barrel domain; it reads AEGEYYYHEI…LVTIHVMEGL (75 aa).

This sequence belongs to the RimM family. In terms of assembly, binds ribosomal protein uS19.

Its subcellular location is the cytoplasm. In terms of biological role, an accessory protein needed during the final step in the assembly of 30S ribosomal subunit, possibly for assembly of the head region. Essential for efficient processing of 16S rRNA. May be needed both before and after RbfA during the maturation of 16S rRNA. It has affinity for free ribosomal 30S subunits but not for 70S ribosomes. The protein is Ribosome maturation factor RimM of Bacillus mycoides (strain KBAB4) (Bacillus weihenstephanensis).